Here is a 492-residue protein sequence, read N- to C-terminus: Cell division protein FtsA (492 aa).

2 disordered regions span residues 288-307 (GEET…DGHE) and 429-458 (YTRT…KAPS). A compositionally biased stretch (polar residues) spans 291–303 (TPSQNVQIPTTGS). Low complexity predominate over residues 436-447 (SSPTPHIHSSPT).

The protein belongs to the FtsA/MreB family. Self-interacts. Interacts with FtsZ.

The protein resides in the cell inner membrane. Functionally, cell division protein that is involved in the assembly of the Z ring. May serve as a membrane anchor for the Z ring. This Helicobacter pylori (strain ATCC 700392 / 26695) (Campylobacter pylori) protein is Cell division protein FtsA.